The chain runs to 96 residues: Co-chaperonin GroES 1 (96 aa).

The protein belongs to the GroES chaperonin family. As to quaternary structure, heptamer of 7 subunits arranged in a ring. Interacts with the chaperonin GroEL.

It localises to the cytoplasm. In terms of biological role, together with the chaperonin GroEL, plays an essential role in assisting protein folding. The GroEL-GroES system forms a nano-cage that allows encapsulation of the non-native substrate proteins and provides a physical environment optimized to promote and accelerate protein folding. GroES binds to the apical surface of the GroEL ring, thereby capping the opening of the GroEL channel. The protein is Co-chaperonin GroES 1 of Vibrio cholerae serotype O1 (strain ATCC 39315 / El Tor Inaba N16961).